A 312-amino-acid polypeptide reads, in one-letter code: Zinc transporter ZitB (312 aa).

The next 5 membrane-spanning stretches (helical) occupy residues 21–41 (LLFAFIVTAGFMLLEVVGGIL), 48–68 (LADAGHMLTDAAALLFALLVV), 90–110 (AAFVNAIALVVITLLIVWEAI), 123–143 (LMMVIAVAGLLANLFAFWILH), and 164–184 (LLGSVGAIVAALIIIWTGWTP).

Belongs to the cation diffusion facilitator (CDF) transporter (TC 2.A.4) family. SLC30A subfamily.

It is found in the cell inner membrane. Involved in zinc efflux across the cytoplasmic membrane, thus reducing zinc accumulation in the cytoplasm and rendering bacteria more resistant to zinc. It may contribute to zinc homeostasis at low concentrations of zinc. In Salmonella typhi, this protein is Zinc transporter ZitB.